We begin with the raw amino-acid sequence, 216 residues long: MGPSSSYPRVVAVLNGKGGVGKTTTAVNLAAALAAKERVLLVDADPQGSASWWAERGTAALGFDLAQETNPRLLESLREVGGYSLVVVDTPPALDSAALAAVVQAADQLVLPTPPAPLDLAVLIETVHRAVLPSGTSHRVLLTRVDPRSLGEAVEAQRTLRERGIPAFEAFIRAYKAHERAALEGLSILQWRGKNAREAEADYRRVAEELDRDWRK.

Residues glycine 18, glycine 19, glycine 21, lysine 22, threonine 23, threonine 24, and glutamine 47 each contribute to the ATP site. Threonine 23 serves as a coordination point for Mg(2+).

It belongs to the ParA family. McdA subfamily. In terms of assembly, homodimerizes in the presence of ATP. Each subunit binds 1 ATP molecule; some residues cross the dimer interface to contact ATP in the other subunit. Forms a complex with McdB.

It is found in the cytoplasm. It localises to the nucleoid. It carries out the reaction ATP + H2O = ADP + phosphate + H(+). Functionally, mcdA and McdB together mediate carboxysome (Cb) spacing, size, ultrastructure and probably inheritance in the cell, together they prevent Cb aggregation. McdA is an ATPase that forms dynamic gradients on the nucleoid in response to adapter protein McdB, which associates with carboxysomes. The interplay between McdA gradients on the nucleoid and McdB-bound carboxysomes result in the equal spacing of Cbs along the cell length. Its function is as follows. Incorrect positioning (aggregation) of carboxysomes results in reduced CO(2) fixation by encapsulated ribulose-1,5-bisphosphate carboxylase (RuBisCO, cbbL/cbbS), which leads to slower growth. This chain is Maintenance of carboxysome distribution protein A, found in Gloeobacter kilaueensis (strain ATCC BAA-2537 / CCAP 1431/1 / ULC 316 / JS1).